The following is a 291-amino-acid chain: Porphobilinogen deaminase (291 aa).

S-(dipyrrolylmethanemethyl)cysteine is present on cysteine 238.

Belongs to the HMBS family. As to quaternary structure, monomer. The cofactor is dipyrromethane.

The enzyme catalyses 4 porphobilinogen + H2O = hydroxymethylbilane + 4 NH4(+). It participates in porphyrin-containing compound metabolism; protoporphyrin-IX biosynthesis; coproporphyrinogen-III from 5-aminolevulinate: step 2/4. Functionally, tetrapolymerization of the monopyrrole PBG into the hydroxymethylbilane pre-uroporphyrinogen in several discrete steps. This Clostridium beijerinckii (strain ATCC 51743 / NCIMB 8052) (Clostridium acetobutylicum) protein is Porphobilinogen deaminase.